Consider the following 521-residue polypeptide: Acetylcholine receptor subunit beta-like 1 (521 aa).

The first 24 residues, methionine 1–alanine 24, serve as a signal peptide directing secretion. At serine 25–lysine 235 the chain is on the extracellular side. Asparagine 48 is a glycosylation site (N-linked (GlcNAc...) asparagine). Cysteine 152 and cysteine 166 are oxidised to a cystine. The next 3 helical transmembrane spans lie at threonine 236–leucine 260, valine 268–serine 286, and tyrosine 302–tryptophan 323. Topologically, residues asparagine 324–arginine 481 are cytoplasmic. Residues leucine 482 to methionine 500 form a helical membrane-spanning segment.

It belongs to the ligand-gated ion channel (TC 1.A.9) family. Acetylcholine receptor (TC 1.A.9.1) subfamily. In terms of tissue distribution, CNS in embryos.

The protein localises to the postsynaptic cell membrane. The protein resides in the cell membrane. After binding acetylcholine, the AChR responds by an extensive change in conformation that affects all subunits and leads to opening of an ion-conducting channel across the plasma membrane. This Drosophila melanogaster (Fruit fly) protein is Acetylcholine receptor subunit beta-like 1 (nAChRbeta1).